An 89-amino-acid chain; its full sequence is Small ribosomal subunit protein uS14 (89 aa).

The tract at residues 32–51 (DYEGLQKLPKNSSPVRLHNR) is disordered.

It belongs to the universal ribosomal protein uS14 family. Part of the 30S ribosomal subunit. Contacts proteins S3 and S10.

Binds 16S rRNA, required for the assembly of 30S particles and may also be responsible for determining the conformation of the 16S rRNA at the A site. This Christiangramia forsetii (strain DSM 17595 / CGMCC 1.15422 / KT0803) (Gramella forsetii) protein is Small ribosomal subunit protein uS14.